A 516-amino-acid polypeptide reads, in one-letter code: L-amino-acid oxidase (516 aa).

The N-terminal stretch at 1–18 (MNVFFMFSLLFLAALGSC) is a signal peptide. A disulfide bridge connects residues C28 and C191. FAD is bound by residues 61 to 62 (MS), 81 to 82 (EA), R89, and 105 to 108 (GPMR). R108 provides a ligand contact to substrate. N-linked (GlcNAc...) asparagine glycosylation is present at N190. H241 provides a ligand contact to substrate. V279 contributes to the FAD binding site. An intrachain disulfide couples C349 to C430. N-linked (GlcNAc...) asparagine glycosylation occurs at N379. Y390 lines the substrate pocket. FAD is bound by residues E475, 481–486 (HGWIDS), and 482–487 (GWIDSS). Residues 481-482 (HG) and 482-483 (GW) contribute to the substrate site.

It belongs to the flavin monoamine oxidase family. FIG1 subfamily. As to quaternary structure, homodimer; non-covalently linked. FAD is required as a cofactor. Post-translationally, N-glycosylated. Expressed by the venom gland.

Its subcellular location is the secreted. The catalysed reaction is an L-alpha-amino acid + O2 + H2O = a 2-oxocarboxylate + H2O2 + NH4(+). In terms of biological role, catalyzes an oxidative deamination of predominantly hydrophobic and aromatic L-amino acids, thus producing hydrogen peroxide that may contribute to the diverse toxic effects of this enzyme. Exhibits diverse biological activities, such as hemorrhage, hemolysis, edema, apoptosis of vascular endothelial cells or tumor cell lines, antibacterial and antiparasitic activities, as well as regulation of platelet aggregation. Effects of snake L-amino oxidases on platelets are controversial, since they either induce aggregation or inhibit agonist-induced aggregation. These different effects are probably due to different experimental conditions. Displays dose-dependent inhibition on HIV-1 infection and replication. This Trimeresurus stejnegeri (Chinese green tree viper) protein is L-amino-acid oxidase.